The chain runs to 101 residues: MITLGHLLGLGAVLFCISLAGIFLNRKNVIVLLMSIELMLLSVNVNFIAFSRELGDTAGQLFVFFILTVAAAEAAIGLAILVTLFRTRRTINVAEVDTLKG.

A run of 3 helical transmembrane segments spans residues 4–24, 30–50, and 62–82; these read LGHL…GIFL, IVLL…FIAF, and FVFF…AILV.

Belongs to the complex I subunit 4L family. As to quaternary structure, NDH-1 is composed of 14 different subunits. Subunits NuoA, H, J, K, L, M, N constitute the membrane sector of the complex.

The protein localises to the cell inner membrane. The enzyme catalyses a quinone + NADH + 5 H(+)(in) = a quinol + NAD(+) + 4 H(+)(out). NDH-1 shuttles electrons from NADH, via FMN and iron-sulfur (Fe-S) centers, to quinones in the respiratory chain. The immediate electron acceptor for the enzyme in this species is believed to be ubiquinone. Couples the redox reaction to proton translocation (for every two electrons transferred, four hydrogen ions are translocated across the cytoplasmic membrane), and thus conserves the redox energy in a proton gradient. The chain is NADH-quinone oxidoreductase subunit K from Xanthomonas axonopodis pv. citri (strain 306).